A 215-amino-acid polypeptide reads, in one-letter code: Ras-related protein Rab-14 (215 aa).

A2 carries the N-acetylalanine modification. GTP contacts are provided by G21, V22, G23, K24, S25, C26, A38, D39, C40, H42, and T43. S25 contributes to the Mg(2+) binding site. The short motif at 42-47 is the Switch 1 element; sequence HTIGVE. The Mg(2+) site is built by T43 and D66. The Switch 2 motif lies at 68-77; the sequence is AGQERFRAVT. The GTP site is built by G69, N124, K125, D127, A155, and K156. Residues 188–215 are disordered; sequence SGVQHKPSAPQGGRLTSEPQPQREGCGC. S-geranylgeranyl cysteine attachment occurs at residues C213 and C215. C215 carries the cysteine methyl ester modification.

It belongs to the small GTPase superfamily. Rab family. Requires Mg(2+) as cofactor.

Its subcellular location is the recycling endosome. It localises to the early endosome membrane. The protein resides in the golgi apparatus membrane. It is found in the golgi apparatus. The protein localises to the trans-Golgi network membrane. Its subcellular location is the cytoplasmic vesicle. It localises to the phagosome. It carries out the reaction GTP + H2O = GDP + phosphate + H(+). With respect to regulation, regulated by guanine nucleotide exchange factors (GEFs) including DENND6A and DENND6B which promote the exchange of bound GDP for free GTP. Regulated by GTPase activating proteins (GAPs) which increase the GTP hydrolysis activity. Inhibited by GDP dissociation inhibitors (GDIs) which prevent Rab-GDP dissociation. In terms of biological role, the small GTPases Rab are key regulators of intracellular membrane trafficking, from the formation of transport vesicles to their fusion with membranes. Rabs cycle between an inactive GDP-bound form and an active GTP-bound form that is able to recruit to membranes different set of downstream effectors directly responsible for vesicle formation, movement, tethering and fusion. Involved in membrane trafficking between the Golgi complex and endosomes during early embryonic development. Regulates the Golgi to endosome transport of FGFR-containing vesicles during early development, a key process for developing basement membrane and epiblast and primitive endoderm lineages during early postimplantation development. May act by modulating the kinesin KIF16B-cargo association to endosomes. Regulates, together with its guanine nucleotide exchange factor DENND6A, the specific endocytic transport of ADAM10, N-cadherin/CDH2 shedding and cell-cell adhesion. Mediates endosomal tethering and fusion through the interaction with RUFY1 and RAB4B. Interaction with RAB11FIP1 may function in the process of neurite formation. In Gallus gallus (Chicken), this protein is Ras-related protein Rab-14 (RAB14).